The following is a 237-amino-acid chain: KH homology domain-containing protein 1 (237 aa).

A run of 2 helical transmembrane segments spans residues 7-29 and 33-50; these read RLFR…FIYG and LQTL…HLWI. Positions 96–155 constitute a KH; atypical domain; sequence PMVFHMEEDQEELIFGHGDTYLRCIEVHSHTLIQLESWFTATGQTRVTVVGPHRARQWLL.

It belongs to the KHDC1 family.

It is found in the membrane. The protein is KH homology domain-containing protein 1 of Homo sapiens (Human).